The sequence spans 75 residues: MNHHNSLDSSDITYKTEELLEATTNRYKITVQVANRAKRRKYEDVDIIDDPQIKPVIRAILEMVDEITQPEIISD.

This sequence belongs to the RNA polymerase subunit omega family.

It is found in the plastid. It localises to the chloroplast. The enzyme catalyses RNA(n) + a ribonucleoside 5'-triphosphate = RNA(n+1) + diphosphate. Functionally, may be involved in RNA polymerase activity. The chain is Putative DNA-directed RNA polymerase subunit omega (rpoZ) from Porphyra purpurea (Red seaweed).